A 447-amino-acid polypeptide reads, in one-letter code: 3-phosphoshikimate 1-carboxyvinyltransferase (447 aa).

A disordered region spans residues 1–22 (MTPSLKRLSGAMRARPAPALSG). Positions 30, 31, and 35 each coordinate 3-phosphoshikimate. Residue Lys-30 participates in phosphoenolpyruvate binding. Residues Gly-102 and Arg-130 each contribute to the phosphoenolpyruvate site. 4 residues coordinate 3-phosphoshikimate: Ser-173, Gln-175, Asp-325, and Lys-352. Gln-175 contributes to the phosphoenolpyruvate binding site. Asp-325 acts as the Proton acceptor in catalysis. Residues Arg-356 and Arg-401 each contribute to the phosphoenolpyruvate site.

The protein belongs to the EPSP synthase family. As to quaternary structure, monomer.

The protein resides in the cytoplasm. It carries out the reaction 3-phosphoshikimate + phosphoenolpyruvate = 5-O-(1-carboxyvinyl)-3-phosphoshikimate + phosphate. It functions in the pathway metabolic intermediate biosynthesis; chorismate biosynthesis; chorismate from D-erythrose 4-phosphate and phosphoenolpyruvate: step 6/7. Its function is as follows. Catalyzes the transfer of the enolpyruvyl moiety of phosphoenolpyruvate (PEP) to the 5-hydroxyl of shikimate-3-phosphate (S3P) to produce enolpyruvyl shikimate-3-phosphate and inorganic phosphate. The protein is 3-phosphoshikimate 1-carboxyvinyltransferase of Maricaulis maris (strain MCS10) (Caulobacter maris).